Consider the following 383-residue polypeptide: Smad nuclear-interacting protein 1 (383 aa).

The segment covering 1-10 (MKAGKSERER) has biased composition (basic and acidic residues). A disordered region spans residues 1–209 (MKAGKSERER…NRSKEVPVKE (209 aa)). Serine 18 carries the post-translational modification Phosphoserine. Lysine 28 is covalently cross-linked (Glycyl lysine isopeptide (Lys-Gly) (interchain with G-Cter in SUMO); alternate). Residue lysine 28 forms a Glycyl lysine isopeptide (Lys-Gly) (interchain with G-Cter in SUMO1); alternate linkage. Lysine 28 participates in a covalent cross-link: Glycyl lysine isopeptide (Lys-Gly) (interchain with G-Cter in SUMO2); alternate. The segment covering 28 to 43 (KQERLSPEPVAHRRPD) has biased composition (basic and acidic residues). Residues serine 33, serine 48, and serine 50 each carry the phosphoserine modification. Positions 44-56 (APAASLSPPAAEP) are enriched in low complexity. The span at 59–90 (SGHRGSRARSPAKKKSKSSGRRSKSPRTKRSQ) shows a compositional bias: basic residues. The residue at position 91 (serine 91) is a Phosphoserine. Composition is skewed to basic and acidic residues over residues 99 to 134 (VKQE…ERDR) and 143 to 159 (RSSD…DRDS). Lysine 100 is covalently cross-linked (Glycyl lysine isopeptide (Lys-Gly) (interchain with G-Cter in SUMO2)). Position 145 is a phosphoserine (serine 145). Residues 153-194 (QDRDRDSQNLQAQEEERDFHNARRREHRQQNESAGSEAQEVI) adopt a coiled-coil conformation. Lysine 210 participates in a covalent cross-link: Glycyl lysine isopeptide (Lys-Gly) (interchain with G-Cter in SUMO2). The region spanning 268–331 (YLLGRHRRIA…NGTFLNNKRI (64 aa)) is the FHA domain. Residues 359–369 (ESSDTSELDRK) are compositionally biased toward basic and acidic residues. The interval 359-383 (ESSDTSELDRKEDEDDEEEEMVSDS) is disordered. Residues 370 to 383 (EDEDDEEEEMVSDS) show a composition bias toward acidic residues. Phosphoserine is present on serine 381.

Component of activated spliceosome complexes. Binds SMAD4 and CREBBP/EP300. Component of the minor spliceosome, which splices U12-type introns. Binds the SMAD1/OAZ1/PSMB4 complex. Interacts with DROSHA and SMARCA4. Component of the SNARP complex which consists at least of SNIP1, SNW1, THRAP3, BCLAF1 and PNN. In terms of processing, degraded by the proteasome upon binding to the SMAD1/OAZ1/PSMB4 complex.

The protein resides in the nucleus. Required for pre-mRNA splicing as component of the spliceosome. As a component of the minor spliceosome, involved in the splicing of U12-type introns in pre-mRNAs. Down-regulates NF-kappa-B signaling by competing with RELA for CREBBP/EP300 binding. Involved in the microRNA (miRNA) biogenesis. May be involved in cyclin-D1/CCND1 mRNA stability through the SNARP complex which associates with both the 3'end of the CCND1 gene and its mRNA. This is Smad nuclear-interacting protein 1 (Snip1) from Mus musculus (Mouse).